A 443-amino-acid polypeptide reads, in one-letter code: Xaa-Pro dipeptidase (443 aa).

Positions 246, 257, 339, 384, and 423 each coordinate Mn(2+).

This sequence belongs to the peptidase M24B family. Bacterial-type prolidase subfamily. It depends on Mn(2+) as a cofactor.

The catalysed reaction is Xaa-L-Pro dipeptide + H2O = an L-alpha-amino acid + L-proline. In terms of biological role, splits dipeptides with a prolyl residue in the C-terminal position. This chain is Xaa-Pro dipeptidase, found in Yersinia pestis bv. Antiqua (strain Nepal516).